Consider the following 473-residue polypeptide: uncharacterized protein (473 aa).

Residues 1 to 86 (MSSSPTESEI…NTSNYGSSRD (86 aa)) are disordered. The span at 10-19 (ILPKESHNSI) shows a compositional bias: basic and acidic residues. 2 stretches are compositionally biased toward polar residues: residues 20–39 (DEQSQQPANTDTLVKDNSFN) and 55–68 (EPVQSQDPISPNMA). S64 carries the phosphoserine modification. The span at 69–83 (SNESGNSENTSNYGS) shows a compositional bias: low complexity. RRM domains follow at residues 95-165 (LWMG…NHLF), 188-260 (IFVG…PIRV), and 305-370 (VFVG…RIRL). A disordered region spans residues 448-473 (MHIPENGNSDTMPVPNTQGKHLSAEE). The span at 453–467 (NGNSDTMPVPNTQGK) shows a compositional bias: polar residues.

This is an uncharacterized protein from Schizosaccharomyces pombe (strain 972 / ATCC 24843) (Fission yeast).